A 93-amino-acid polypeptide reads, in one-letter code: Cell division protein FtsB (93 aa).

At 1-3 (MRL) the chain is on the cytoplasmic side. A helical transmembrane segment spans residues 4 to 21 (FILVLTLLFGWLQYTLWF). Residues 22-93 (GKNGVSDYYT…FYRIVGEENQ (72 aa)) are Periplasmic-facing. Residues 42-75 (VNTKLQARNSEMYAEIDDLKQGLDAIEERARHEL) adopt a coiled-coil conformation.

The protein belongs to the FtsB family. In terms of assembly, part of a complex composed of FtsB, FtsL and FtsQ.

It is found in the cell inner membrane. Functionally, essential cell division protein. May link together the upstream cell division proteins, which are predominantly cytoplasmic, with the downstream cell division proteins, which are predominantly periplasmic. This chain is Cell division protein FtsB, found in Vibrio vulnificus (strain YJ016).